The primary structure comprises 131 residues: 23S rRNA-specific endonuclease VapC20 (131 aa).

The PINc domain occupies 2–125 (IFVDTSFWAA…FDGDFSAAGF (124 aa)). 2 residues coordinate Mg(2+): Asp-5 and Asp-98.

It belongs to the PINc/VapC protein family. Mg(2+) serves as cofactor.

Toxic component of a type II toxin-antitoxin (TA) system. An endoribonuclease that cleaves 23S rRNA in the sarcin-ricin loop (SRL). The SRL sequence is highly conserved and is implicated in GTP hydrolysis by EF-Tu and EF-G. Acts on purified ribosomes but not on isolated RNA. Its toxic effect is neutralized by coexpression with cognate antitoxin VapB20. This is 23S rRNA-specific endonuclease VapC20 (vapC20) from Mycobacterium tuberculosis (strain CDC 1551 / Oshkosh).